The primary structure comprises 574 residues: Putative ABC transporter ATP-binding protein VVA0347 (574 aa).

2 ABC transporter domains span residues 3 to 244 (IEFS…GIRE) and 299 to 533 (LDVR…ANLT). Residues 37 to 44 (GPSGSGKS) and 332 to 339 (GKNGSGKS) contribute to the ATP site.

This sequence belongs to the ABC transporter superfamily.

It localises to the cell inner membrane. In terms of biological role, probably part of an ABC transporter complex. Responsible for energy coupling to the transport system. The sequence is that of Putative ABC transporter ATP-binding protein VVA0347 from Vibrio vulnificus (strain YJ016).